The chain runs to 447 residues: tRNA modification GTPase MnmE (447 aa).

Positions 24, 81, and 120 each coordinate (6S)-5-formyl-5,6,7,8-tetrahydrofolate. The region spanning 216–371 (GLNVAIAGKP…LRKELSNISG (156 aa)) is the TrmE-type G domain. Asparagine 226 serves as a coordination point for K(+). GTP is bound by residues 226–231 (NAGKSS), 245–251 (TDIAGTT), and 270–273 (DTAG). Serine 230 contributes to the Mg(2+) binding site. Positions 245, 247, and 250 each coordinate K(+). Threonine 251 lines the Mg(2+) pocket. Lysine 447 is a binding site for (6S)-5-formyl-5,6,7,8-tetrahydrofolate.

This sequence belongs to the TRAFAC class TrmE-Era-EngA-EngB-Septin-like GTPase superfamily. TrmE GTPase family. Homodimer. Heterotetramer of two MnmE and two MnmG subunits. Requires K(+) as cofactor.

Its subcellular location is the cytoplasm. Functionally, exhibits a very high intrinsic GTPase hydrolysis rate. Involved in the addition of a carboxymethylaminomethyl (cmnm) group at the wobble position (U34) of certain tRNAs, forming tRNA-cmnm(5)s(2)U34. This Vesicomyosocius okutanii subsp. Calyptogena okutanii (strain HA) protein is tRNA modification GTPase MnmE.